The chain runs to 258 residues: Imidazole glycerol phosphate synthase subunit HisF (258 aa).

Catalysis depends on residues Asp-12 and Asp-131.

This sequence belongs to the HisA/HisF family. Heterodimer of HisH and HisF.

The protein localises to the cytoplasm. It carries out the reaction 5-[(5-phospho-1-deoxy-D-ribulos-1-ylimino)methylamino]-1-(5-phospho-beta-D-ribosyl)imidazole-4-carboxamide + L-glutamine = D-erythro-1-(imidazol-4-yl)glycerol 3-phosphate + 5-amino-1-(5-phospho-beta-D-ribosyl)imidazole-4-carboxamide + L-glutamate + H(+). It participates in amino-acid biosynthesis; L-histidine biosynthesis; L-histidine from 5-phospho-alpha-D-ribose 1-diphosphate: step 5/9. In terms of biological role, IGPS catalyzes the conversion of PRFAR and glutamine to IGP, AICAR and glutamate. The HisF subunit catalyzes the cyclization activity that produces IGP and AICAR from PRFAR using the ammonia provided by the HisH subunit. The polypeptide is Imidazole glycerol phosphate synthase subunit HisF (Nitrosomonas europaea (strain ATCC 19718 / CIP 103999 / KCTC 2705 / NBRC 14298)).